Consider the following 373-residue polypeptide: MAQIDIRQVRKSYGKTPTLHGVDLSFDSGEFVVILGPSGCGKSTLLRMIAGLEEITSGEIAIGGRVVNTLEPRERGCAMVFQNYALYPHMSVAANIGYALKVAGVPKAERQRRIEETAKIVGLSDYLERKPAALSGGQRQRVAMARAIIREPAVFLFDEPLSNLDAKLRVSMRAEIRKLHQRLSATSIFVTHDQVEAMTLADRLVVMNKGNVEQVGHPLDIYHRPASTFVASFIGSPAMNLFTTKVEVETPAVILSGTPVKLFPETALELRGRNVTVGIRPEQCVVSMDGPGVPAIVDFVEELGSGRIVHADIAGETFSAAIGEDLLVKPGQRIHLDLPTAHLHFFDPATGKRIETEGTAETARSKNETLLAV.

The 231-residue stretch at 4 to 234 (IDIRQVRKSY…PASTFVASFI (231 aa)) folds into the ABC transporter domain. 36 to 43 (GPSGCGKS) serves as a coordination point for ATP.

This sequence belongs to the ABC transporter superfamily. sn-glycerol-3-phosphate importer (TC 3.A.1.1.3) family. The complex is composed of two ATP-binding proteins (UgpC), two transmembrane proteins (UgpA and UgpE) and a solute-binding protein (UgpB).

Its subcellular location is the cell inner membrane. It catalyses the reaction sn-glycerol 3-phosphate(out) + ATP + H2O = sn-glycerol 3-phosphate(in) + ADP + phosphate + H(+). In terms of biological role, part of the ABC transporter complex UgpBAEC involved in sn-glycerol-3-phosphate (G3P) import. Responsible for energy coupling to the transport system. The sequence is that of sn-glycerol-3-phosphate import ATP-binding protein UgpC 2 from Agrobacterium fabrum (strain C58 / ATCC 33970) (Agrobacterium tumefaciens (strain C58)).